Consider the following 310-residue polypeptide: Thioredoxin reductase (310 aa).

34-41 (NGMQPGGQ) is a binding site for FAD. Cysteines 135 and 138 form a disulfide. 281 to 290 (DVQDKIYRQA) contributes to the FAD binding site.

This sequence belongs to the class-II pyridine nucleotide-disulfide oxidoreductase family. In terms of assembly, homodimer. FAD serves as cofactor.

It localises to the cytoplasm. It carries out the reaction [thioredoxin]-dithiol + NADP(+) = [thioredoxin]-disulfide + NADPH + H(+). In Rickettsia conorii (strain ATCC VR-613 / Malish 7), this protein is Thioredoxin reductase (trxB).